A 642-amino-acid polypeptide reads, in one-letter code: Putative ankyrin repeat protein L91 (642 aa).

ANK repeat units follow at residues histidine 42–proline 76, glutamate 85–isoleucine 118, asparagine 153–serine 186, asparagine 190–lysine 224, asparagine 227–alanine 256, glutamate 260–histidine 288, asparagine 292–glutamate 322, asparagine 326–isoleucine 360, serine 365–alanine 397, glutamate 401–histidine 434, aspartate 438–isoleucine 470, lysine 475–alanine 514, tyrosine 518–histidine 550, and asparagine 554–isoleucine 587.

This Acanthamoeba polyphaga (Amoeba) protein is Putative ankyrin repeat protein L91.